The primary structure comprises 146 residues: Large ribosomal subunit protein uL15 (146 aa).

Positions 1-13 are enriched in basic and acidic residues; that stretch reads MKLHELRPAEGSR. The tract at residues 1 to 55 is disordered; that stretch reads MKLHELRPAEGSRKSPKRVGRGTGSGLGKTSARGENGQNSRSGGGVRPGFEGGQM. Gly residues predominate over residues 42-52; the sequence is SGGGVRPGFEG.

This sequence belongs to the universal ribosomal protein uL15 family. In terms of assembly, part of the 50S ribosomal subunit.

Functionally, binds to the 23S rRNA. The protein is Large ribosomal subunit protein uL15 of Clostridium tetani (strain Massachusetts / E88).